The following is a 171-amino-acid chain: Adenine phosphoribosyltransferase (171 aa).

This sequence belongs to the purine/pyrimidine phosphoribosyltransferase family. In terms of assembly, homodimer.

Its subcellular location is the cytoplasm. It catalyses the reaction AMP + diphosphate = 5-phospho-alpha-D-ribose 1-diphosphate + adenine. It participates in purine metabolism; AMP biosynthesis via salvage pathway; AMP from adenine: step 1/1. Catalyzes a salvage reaction resulting in the formation of AMP, that is energically less costly than de novo synthesis. In Halalkalibacterium halodurans (strain ATCC BAA-125 / DSM 18197 / FERM 7344 / JCM 9153 / C-125) (Bacillus halodurans), this protein is Adenine phosphoribosyltransferase.